A 398-amino-acid polypeptide reads, in one-letter code: UDP-N-acetylglucosamine--N-acetylmuramyl-(pentapeptide) pyrophosphoryl-undecaprenol N-acetylglucosamine transferase (398 aa).

Residues 11-13 (TGG), Asn124, Arg164, Ser192, and Gln318 contribute to the UDP-N-acetyl-alpha-D-glucosamine site.

This sequence belongs to the glycosyltransferase 28 family. MurG subfamily.

The protein localises to the cell membrane. It carries out the reaction di-trans,octa-cis-undecaprenyl diphospho-N-acetyl-alpha-D-muramoyl-L-alanyl-D-glutamyl-meso-2,6-diaminopimeloyl-D-alanyl-D-alanine + UDP-N-acetyl-alpha-D-glucosamine = di-trans,octa-cis-undecaprenyl diphospho-[N-acetyl-alpha-D-glucosaminyl-(1-&gt;4)]-N-acetyl-alpha-D-muramoyl-L-alanyl-D-glutamyl-meso-2,6-diaminopimeloyl-D-alanyl-D-alanine + UDP + H(+). It participates in cell wall biogenesis; peptidoglycan biosynthesis. Cell wall formation. Catalyzes the transfer of a GlcNAc subunit on undecaprenyl-pyrophosphoryl-MurNAc-pentapeptide (lipid intermediate I) to form undecaprenyl-pyrophosphoryl-MurNAc-(pentapeptide)GlcNAc (lipid intermediate II). In Deinococcus radiodurans (strain ATCC 13939 / DSM 20539 / JCM 16871 / CCUG 27074 / LMG 4051 / NBRC 15346 / NCIMB 9279 / VKM B-1422 / R1), this protein is UDP-N-acetylglucosamine--N-acetylmuramyl-(pentapeptide) pyrophosphoryl-undecaprenol N-acetylglucosamine transferase.